We begin with the raw amino-acid sequence, 293 residues long: Iron-sulfur cluster transfer protein Nubpl (293 aa).

The interval 214-217 is CXXC motif probably involved in coordinating iron-sulfur cluster binding; it reads CQNC.

The protein belongs to the Mrp/NBP35 ATP-binding proteins family. As to quaternary structure, homodimer; dimerization is not reliant on iron-sulfur cluster binding. It depends on [4Fe-4S] cluster as a cofactor.

Its subcellular location is the mitochondrion membrane. Functionally, iron-sulfur cluster transfer protein involved in the assembly of the mitochondrial membrane respiratory chain NADH dehydrogenase (Complex I). May deliver one or more Fe-S clusters to complex I subunits. Alleviates pausing in mitochondrial DNA (mtDNA) replication at slow zone 2. May be involved in mtDNA-helicase-mediated mtDNA unwinding and replication by transferring iron-sulfur clusters. This Drosophila melanogaster (Fruit fly) protein is Iron-sulfur cluster transfer protein Nubpl.